The sequence spans 127 residues: RutC family protein PYRAB12510 (127 aa).

The protein belongs to the RutC family.

The sequence is that of RutC family protein PYRAB12510 from Pyrococcus abyssi (strain GE5 / Orsay).